A 681-amino-acid chain; its full sequence is Peroxisomal acyl-coenzyme A oxidase 2 (681 aa).

A disordered region spans residues methionine 1 to serine 28. The residue at position 9 (serine 9) is a Phosphoserine. A Phosphothreonine modification is found at threonine 13. The segment covering tryptophan 14–serine 28 has biased composition (basic and acidic residues). N6-succinyllysine occurs at positions 66, 137, 303, 453, 561, and 667. The short motif at proline 679–leucine 681 is the Microbody targeting signal element.

It belongs to the acyl-CoA oxidase family. As to quaternary structure, homodimer. Requires FAD as cofactor. In terms of processing, acetylation of Lys-667 is observed in liver mitochondria from fasted mice but not from fed mice.

It is found in the peroxisome. It catalyses the reaction (25R)-3alpha,7alpha,12alpha-trihydroxy-5beta-cholestan-26-oyl-CoA + A + H2O = (24R,25R)-3alpha,7alpha,12alpha,24-tetrahydroxy-5beta-cholestan-26-oyl-CoA + AH2. The catalysed reaction is (25S)-3alpha,7alpha,12alpha-trihydroxy-5beta-cholestan-26-oyl-CoA + O2 = (24E)-3alpha,7alpha,12alpha-trihydroxy-5beta-cholest-24-en-26-oyl-CoA + H2O2. Oxidizes the CoA esters of the bile acid intermediates di- and tri-hydroxycoprostanic acids. Capable of oxidizing short as well as long chain 2-methyl branched fatty acids. This Mus musculus (Mouse) protein is Peroxisomal acyl-coenzyme A oxidase 2.